We begin with the raw amino-acid sequence, 342 residues long: Methylthioribose-1-phosphate isomerase (342 aa).

Residues 49 to 51 (RGA), Arg-86, and Gln-187 contribute to the substrate site. Asp-228 functions as the Proton donor in the catalytic mechanism. A substrate-binding site is contributed by 238 to 239 (NK).

The protein belongs to the eIF-2B alpha/beta/delta subunits family. MtnA subfamily.

The enzyme catalyses 5-(methylsulfanyl)-alpha-D-ribose 1-phosphate = 5-(methylsulfanyl)-D-ribulose 1-phosphate. Its pathway is amino-acid biosynthesis; L-methionine biosynthesis via salvage pathway; L-methionine from S-methyl-5-thio-alpha-D-ribose 1-phosphate: step 1/6. Catalyzes the interconversion of methylthioribose-1-phosphate (MTR-1-P) into methylthioribulose-1-phosphate (MTRu-1-P). In Enterobacter sp. (strain 638), this protein is Methylthioribose-1-phosphate isomerase.